Reading from the N-terminus, the 309-residue chain is Probable manganese-dependent inorganic pyrophosphatase (309 aa).

The Mn(2+) site is built by His-9, Asp-13, Asp-15, Asp-75, His-97, and Asp-149.

Belongs to the PPase class C family. It depends on Mn(2+) as a cofactor.

Its subcellular location is the cytoplasm. The catalysed reaction is diphosphate + H2O = 2 phosphate + H(+). This chain is Probable manganese-dependent inorganic pyrophosphatase, found in Staphylococcus haemolyticus (strain JCSC1435).